The sequence spans 526 residues: AAA ATPase forming ring-shaped complexes (526 aa).

Positions 1 to 18 (MGDMASSTDPAAHNSFSD) are enriched in polar residues. Residues 1–20 (MGDMASSTDPAAHNSFSDFN) form a disordered region. Residues 20–59 (NREEMTRLADNVRSLQRTNQDLSARNTKLAEMLKSSRDKL) adopt a coiled-coil conformation. 257 to 262 (GCGKTL) serves as a coordination point for ATP.

This sequence belongs to the AAA ATPase family. Homohexamer. Assembles into a hexameric ring structure.

This chain is AAA ATPase forming ring-shaped complexes, found in Corynebacterium efficiens (strain DSM 44549 / YS-314 / AJ 12310 / JCM 11189 / NBRC 100395).